The sequence spans 612 residues: Dihydroxy-acid dehydratase (612 aa).

Mg(2+) is bound at residue aspartate 81. Cysteine 122 contributes to the [2Fe-2S] cluster binding site. 2 residues coordinate Mg(2+): aspartate 123 and lysine 124. Lysine 124 is subject to N6-carboxylysine. Cysteine 193 is a binding site for [2Fe-2S] cluster. Glutamate 489 lines the Mg(2+) pocket. Residue serine 515 is the Proton acceptor of the active site.

Belongs to the IlvD/Edd family. In terms of assembly, homodimer. [2Fe-2S] cluster is required as a cofactor. It depends on Mg(2+) as a cofactor.

It catalyses the reaction (2R)-2,3-dihydroxy-3-methylbutanoate = 3-methyl-2-oxobutanoate + H2O. It carries out the reaction (2R,3R)-2,3-dihydroxy-3-methylpentanoate = (S)-3-methyl-2-oxopentanoate + H2O. It functions in the pathway amino-acid biosynthesis; L-isoleucine biosynthesis; L-isoleucine from 2-oxobutanoate: step 3/4. The protein operates within amino-acid biosynthesis; L-valine biosynthesis; L-valine from pyruvate: step 3/4. Its function is as follows. Functions in the biosynthesis of branched-chain amino acids. Catalyzes the dehydration of (2R,3R)-2,3-dihydroxy-3-methylpentanoate (2,3-dihydroxy-3-methylvalerate) into 2-oxo-3-methylpentanoate (2-oxo-3-methylvalerate) and of (2R)-2,3-dihydroxy-3-methylbutanoate (2,3-dihydroxyisovalerate) into 2-oxo-3-methylbutanoate (2-oxoisovalerate), the penultimate precursor to L-isoleucine and L-valine, respectively. The protein is Dihydroxy-acid dehydratase of Xanthomonas campestris pv. campestris (strain 8004).